The chain runs to 310 residues: AT-hook motif nuclear-localized protein 15 (310 aa).

2 disordered regions span residues 15–112 (VESP…KESP) and 239–310 (EEEQ…PPSY). Composition is skewed to polar residues over residues 31 to 41 (SNNNNPPTMTR) and 51 to 67 (TTNN…SQEE). The segment at residues 88 to 100 (RRPRGRPPGSKNK) is a DNA-binding region (a.T hook). The segment covering 94–104 (PPGSKNKPKSP) has biased composition (low complexity). In terms of domain architecture, PPC spans 112–251 (PNSLQSHVLE…QQQEQPLQLE (140 aa)). Positions 301–310 (GPPPRAPPSY) are enriched in pro residues.

It is found in the nucleus. In terms of biological role, transcription factor that specifically binds AT-rich DNA sequences related to the nuclear matrix attachment regions (MARs). Binds the DNA sequence GNFEI (GA-negative feedback element I) in the GA3OX1 promoter. Negatively regulates plant innate immunity (PTI) to pathogens through the down-regulation of the PAMP-triggered FRK1 expression. The chain is AT-hook motif nuclear-localized protein 15 from Arabidopsis thaliana (Mouse-ear cress).